We begin with the raw amino-acid sequence, 194 residues long: Thymidine kinase (194 aa).

ATP is bound by residues 15-22 and 88-91; these read GSMFSGKS and DEVQ. Residue Glu-89 is the Proton acceptor of the active site. The Zn(2+) site is built by Cys-145, Cys-148, Cys-183, and His-186.

The protein belongs to the thymidine kinase family. Homotetramer.

It is found in the cytoplasm. The enzyme catalyses thymidine + ATP = dTMP + ADP + H(+). This chain is Thymidine kinase, found in Bacillus licheniformis (strain ATCC 14580 / DSM 13 / JCM 2505 / CCUG 7422 / NBRC 12200 / NCIMB 9375 / NCTC 10341 / NRRL NRS-1264 / Gibson 46).